Consider the following 207-residue polypeptide: Thymidylate kinase (207 aa).

Residue 10 to 17 coordinates ATP; that stretch reads GIEGSGKS.

It belongs to the thymidylate kinase family.

The catalysed reaction is dTMP + ATP = dTDP + ADP. Its function is as follows. Phosphorylation of dTMP to form dTDP in both de novo and salvage pathways of dTTP synthesis. The chain is Thymidylate kinase from Halothermothrix orenii (strain H 168 / OCM 544 / DSM 9562).